The chain runs to 97 residues: U6-theraphotoxin-Hhn1a 4 (97 aa).

An N-terminal signal peptide occupies residues 1–33 (MLIKQFSRRSKNMKVQILLAFAALFVLAVGSYA). The propeptide occupies 34–61 (SESKKLDLRDALLSAMFSADYQLNPQER). Cystine bridges form between Cys-63–Cys-77, Cys-70–Cys-82, and Cys-76–Cys-89.

Belongs to the neurotoxin 10 (Hwtx-1) family. 12 (Hntx-12) subfamily. In terms of tissue distribution, expressed by the venom gland.

The protein resides in the secreted. Ion channel inhibitor. The protein is U6-theraphotoxin-Hhn1a 4 of Cyriopagopus hainanus (Chinese bird spider).